The chain runs to 338 residues: Lipoate-protein ligase A (338 aa).

The BPL/LPL catalytic domain occupies 29 to 216 (PATQRVLFLW…AFFAYYGERV (188 aa)). ATP is bound by residues R71, 76 to 79 (GAVF), and K134. Residue K134 participates in (R)-lipoate binding.

The protein belongs to the LplA family. As to quaternary structure, monomer.

The protein localises to the cytoplasm. The enzyme catalyses L-lysyl-[lipoyl-carrier protein] + (R)-lipoate + ATP = N(6)-[(R)-lipoyl]-L-lysyl-[lipoyl-carrier protein] + AMP + diphosphate + H(+). The protein operates within protein modification; protein lipoylation via exogenous pathway; protein N(6)-(lipoyl)lysine from lipoate: step 1/2. Its pathway is protein modification; protein lipoylation via exogenous pathway; protein N(6)-(lipoyl)lysine from lipoate: step 2/2. In terms of biological role, catalyzes both the ATP-dependent activation of exogenously supplied lipoate to lipoyl-AMP and the transfer of the activated lipoyl onto the lipoyl domains of lipoate-dependent enzymes. The polypeptide is Lipoate-protein ligase A (Cronobacter sakazakii (strain ATCC BAA-894) (Enterobacter sakazakii)).